Consider the following 268-residue polypeptide: Energy-coupling factor transporter transmembrane protein EcfT (268 aa).

5 helical membrane-spanning segments follow: residues 29 to 49 (VFIFLVFMFMTRDPLLLTVAV), 75 to 95 (IIIVLTFVLHLFMTGGGEVIV), 107 to 127 (LIEGFMLAMKLAMIITIASLL), 152 to 172 (LPTHELALMMSIALRFIPTLI), and 242 to 262 (WGLKDSVVLAVFLLFAAAVMA).

This sequence belongs to the energy-coupling factor EcfT family. In terms of assembly, forms a stable energy-coupling factor (ECF) transporter complex composed of 2 membrane-embedded substrate-binding proteins (S component), 2 ATP-binding proteins (A component) and 2 transmembrane proteins (T component). May be able to interact with more than 1 S component at a time.

Its subcellular location is the cell membrane. Its function is as follows. Transmembrane (T) component of an energy-coupling factor (ECF) ABC-transporter complex. Unlike classic ABC transporters this ECF transporter provides the energy necessary to transport a number of different substrates. This is Energy-coupling factor transporter transmembrane protein EcfT from Bacillus selenitireducens (strain ATCC 700615 / DSM 15326 / MLS10).